A 918-amino-acid polypeptide reads, in one-letter code: DNA repair and recombination protein RAD54B (918 aa).

Residues 1-11 show a composition bias toward polar residues; sequence MRRSAAPSQVL. Residues 1–29 are disordered; sequence MRRSAAPSQVLGNVAKKPRFIPPGKSNAL. Positions 320–487 constitute a Helicase ATP-binding domain; that stretch reads GMRVSGRFGA…YALIEFVNPG (168 aa). 333-340 is a binding site for ATP; it reads DEMGLGKT. Residues 438-441 carry the DEGH box motif; that stretch reads DEGH. The Helicase C-terminal domain maps to 653 to 817; sequence VLVKLLAAIR…HIHFSVEELR (165 aa). The tract at residues 842–873 is disordered; it reads KDHQNPSSKKPSVSRCCQLRQDQGKHNSKKPL.

It belongs to the SNF2/RAD54 helicase family.

The protein localises to the nucleus. Functionally, involved in DNA repair and mitotic recombination. The polypeptide is DNA repair and recombination protein RAD54B (RAD54B) (Gallus gallus (Chicken)).